A 218-amino-acid chain; its full sequence is Adenylate kinase (218 aa).

10 to 15 is an ATP binding site; sequence GAGKGT. Residues 30 to 59 are NMP; sequence STGDMLRAAVKAGTPLGLEAKKVMDAGGLV. Residues threonine 31, arginine 36, 57–59, 85–88, and glutamine 92 contribute to the AMP site; these read GLV and GFPR. Residues 122 to 159 are LID; sequence GRRVHVASGRTYHVKFNPPKVAGKDDETGEDLIQRADD. ATP contacts are provided by residues arginine 123 and 132–133; that span reads TY. The AMP site is built by arginine 156 and arginine 167. Glycine 203 provides a ligand contact to ATP.

It belongs to the adenylate kinase family. As to quaternary structure, monomer.

The protein localises to the cytoplasm. It carries out the reaction AMP + ATP = 2 ADP. Its pathway is purine metabolism; AMP biosynthesis via salvage pathway; AMP from ADP: step 1/1. Catalyzes the reversible transfer of the terminal phosphate group between ATP and AMP. Plays an important role in cellular energy homeostasis and in adenine nucleotide metabolism. The protein is Adenylate kinase of Laribacter hongkongensis (strain HLHK9).